A 224-amino-acid chain; its full sequence is Transcription factor HEC3 (224 aa).

2 disordered regions span residues 22–42 and 68–88; these read SSNN…DPIG and SLTT…EEEP. Over residues 28 to 37 the composition is skewed to basic and acidic residues; that stretch reads KNDDHHHQHN. Residues 68–77 show a composition bias toward low complexity; sequence SLTTTTLLSG. The segment covering 78 to 88 has biased composition (acidic residues); it reads DQEDDEDEEEP. Positions 125 to 174 constitute a bHLH domain; sequence ISDDPQSVAARHRRERISERIRILQRLVPGGTKMDTASMLDEAIRYVKFL. Residues 183-224 are disordered; that stretch reads NNTGYTPPPPQDQASQAVTTSWVSPPPPPSFGRGGRGVGELI. Residues 194–204 are compositionally biased toward polar residues; it reads DQASQAVTTSW. Gly residues predominate over residues 214-224; it reads GRGGRGVGELI.

As to quaternary structure, homodimer. Interacts with SPT. As to expression, gynoecium.

The protein resides in the nucleus. Required for the female reproductive tract development and fertility. This chain is Transcription factor HEC3 (HEC3), found in Arabidopsis thaliana (Mouse-ear cress).